A 404-amino-acid chain; its full sequence is Cysteine desulfurase IscS (404 aa).

Residues 75 to 76, asparagine 155, glutamine 183, and 203 to 205 each bind pyridoxal 5'-phosphate; these read AT and SGH. Position 206 is an N6-(pyridoxal phosphate)lysine (lysine 206). Residue threonine 243 coordinates pyridoxal 5'-phosphate. Residue cysteine 328 is the Cysteine persulfide intermediate of the active site. Position 328 (cysteine 328) interacts with [2Fe-2S] cluster.

This sequence belongs to the class-V pyridoxal-phosphate-dependent aminotransferase family. NifS/IscS subfamily. In terms of assembly, homodimer. Forms a heterotetramer with IscU, interacts with other sulfur acceptors. The cofactor is pyridoxal 5'-phosphate.

It is found in the cytoplasm. It carries out the reaction (sulfur carrier)-H + L-cysteine = (sulfur carrier)-SH + L-alanine. Its pathway is cofactor biosynthesis; iron-sulfur cluster biosynthesis. Functionally, master enzyme that delivers sulfur to a number of partners involved in Fe-S cluster assembly, tRNA modification or cofactor biosynthesis. Catalyzes the removal of elemental sulfur atoms from cysteine to produce alanine. Functions as a sulfur delivery protein for Fe-S cluster synthesis onto IscU, an Fe-S scaffold assembly protein, as well as other S acceptor proteins. This chain is Cysteine desulfurase IscS, found in Shewanella sp. (strain MR-4).